Reading from the N-terminus, the 501-residue chain is Glycine betaine/proline/ectoine/pipecolic acid transporter OusA (501 aa).

The Cytoplasmic segment spans residues 1–38; the sequence is MKLKRKRVKPIALDDVTIIDDGRLRKAITAAALGNAME. A helical membrane pass occupies residues 39-59; it reads WFDFGVYGFVAYALGQVFFPG. At 60–66 the chain is on the periplasmic side; sequence ADPGVQM. The helical transmembrane segment at 67–87 threads the bilayer; that stretch reads IAALATFSVPFLIRPLGGVFF. Residues 88–98 are Cytoplasmic-facing; it reads GALGDKYGRQK. The chain crosses the membrane as a helical span at residues 99–119; the sequence is ILAITIIIMSISTFCIGLIPS. Residues 120–122 are Periplasmic-facing; sequence YER. Residues 123–143 traverse the membrane as a helical segment; that stretch reads IGIWAPILLLLAKMAQGFSVG. Residues 144 to 170 lie on the Cytoplasmic side of the membrane; that stretch reads GEYTGASIFVAEYSPDRKRGFMGSWLD. The helical transmembrane segment at 171–191 threads the bilayer; the sequence is FGSIAGFVLGAGVVVLISTLI. The Periplasmic segment spans residues 192–195; that stretch reads GEQA. Residues 196–216 traverse the membrane as a helical segment; it reads FLAWGWRLPFFLALPLGLIGL. Topologically, residues 217-261 are cytoplasmic; sequence YLRHALEETPAFRQHVEKLEQNDRDGLKAGPGVSFREIATHHWKS. Residues 262-282 form a helical membrane-spanning segment; it reads LLVCIGLVIATNVTYYMLLTY. The Periplasmic portion of the chain corresponds to 283–298; that stretch reads MPSYLSHSLHYSENHG. Residues 299–319 traverse the membrane as a helical segment; sequence VLIIIAIMIGMLFVQPVMGLL. The Cytoplasmic segment spans residues 320–326; sequence SDRFGRK. A helical membrane pass occupies residues 327-347; that stretch reads PFVVIGSVAMFFLAVPSFMLI. The Periplasmic portion of the chain corresponds to 348 to 350; the sequence is NSD. A helical transmembrane segment spans residues 351–371; the sequence is IIGLIFLGLLMLAVILNAFTG. Over 372 to 391 the chain is Cytoplasmic; sequence VMASTLPALFPTHIRYSALA. Residues 392–412 traverse the membrane as a helical segment; sequence SAFNISVLIAGLTPTVAAWLV. At 413–417 the chain is on the periplasmic side; it reads ESSQN. Residues 418–438 traverse the membrane as a helical segment; sequence LYMPAYYLMVIAVIGLLTGLF. Topologically, residues 439–501 are cytoplasmic; that stretch reads MKETANKPLK…LVAQHPRIND (63 aa). Positions 461-495 form a coiled coil; the sequence is KEILQEHHDNIEHKIEDITQQIAELEAKRQLLVAQ.

The protein belongs to the major facilitator superfamily. Sugar transporter (TC 2.A.1.1) family.

The protein localises to the cell inner membrane. In terms of biological role, involved in uptake and accumulation of various osmoprotectants. Allows the uptake of glycine betaine, proline, ectoine, and pipecolic acid. May be a contributory factor in the infection progression within the host. The protein is Glycine betaine/proline/ectoine/pipecolic acid transporter OusA of Dickeya dadantii (strain 3937) (Erwinia chrysanthemi (strain 3937)).